The following is a 281-amino-acid chain: Pantothenate synthetase (281 aa).

An ATP-binding site is contributed by 30–37 (MGNLHQGH). H37 functions as the Proton donor in the catalytic mechanism. Q61 is a binding site for (R)-pantoate. Position 61 (Q61) interacts with beta-alanine. Residue 149–152 (GNKD) participates in ATP binding. Q155 lines the (R)-pantoate pocket. Residues I178 and 186 to 189 (MSSR) each bind ATP.

This sequence belongs to the pantothenate synthetase family. Homodimer.

It localises to the cytoplasm. The catalysed reaction is (R)-pantoate + beta-alanine + ATP = (R)-pantothenate + AMP + diphosphate + H(+). It functions in the pathway cofactor biosynthesis; (R)-pantothenate biosynthesis; (R)-pantothenate from (R)-pantoate and beta-alanine: step 1/1. Its function is as follows. Catalyzes the condensation of pantoate with beta-alanine in an ATP-dependent reaction via a pantoyl-adenylate intermediate. The polypeptide is Pantothenate synthetase (Shewanella baltica (strain OS223)).